The primary structure comprises 941 residues: Myosin heavy chain kinase D (941 aa).

Positions 8-48 (KLSKKIEKILEKNDYLKKKVEQLTKSVDNHEFKIQELLLLL) form a coiled coil. Low complexity-rich tracts occupy residues 57–70 (TTTT…NNST), 84–115 (TSTD…TTTS), and 124–206 (NSNN…PQLS). Disordered regions lie at residues 57–234 (TTTT…KEDS) and 276–310 (SSNN…QQQQ). Positions 289-317 (SILNDQQNQQQNQQQQNQQQQQEEINFIT) form a coiled coil. Residues 337 to 582 (EYSANDDEWT…ICLQFGLPPI (246 aa)) form the Alpha-type protein kinase domain. WD repeat units follow at residues 635 to 674 (GHDE…DLSK), 683 to 720 (AHRR…TTTT), 741 to 780 (DHTA…CIKS), 783 to 820 (AHGK…CVYG), 824 to 861 (AHDA…PTTT), 864 to 902 (QHNM…EPIK), and 909 to 941 (AHRS…WKNK).

Belongs to the protein kinase superfamily. Alpha-type protein kinase family. ALPK subfamily.

It catalyses the reaction L-threonyl-[myosin heavy-chain] + ATP = O-phospho-L-threonyl-[myosin heavy-chain] + ADP + H(+). Functionally, phosphorylates threonine. Not critical for regulating the assembly and disassembly of myosin II filament. In Dictyostelium discoideum (Social amoeba), this protein is Myosin heavy chain kinase D (mhkD).